A 448-amino-acid polypeptide reads, in one-letter code: MAKHRYLPMTEQDEKEMLDVIGVKSIDDLFQDIPEKIRFKRDYDLKPAKSEPALLRELSKLASKNANTTEYASFLGAGVYSHYIPTVVDHVISRSEFYTAYTPYQPEISQGELQAIFEFQTMIAELTGMDLANSSMYDGGTALAEAAMLASGHTKRKKILISGAVHPESSNVLKTYATGQHIEVEVIPELDGKTDIEALKKALSDDIAGFVVQYPNFYGQVEPLAELEKLVHENNSLLLVSSNPLSLGLLTPPGEFGADIVVGDSQVFGIPESFGGPHCGFFAVTNKLMRKVPGRLVGETVDENGKRGYVLTLQAREQHIRRDKATSNICSNQALNALASSVAMATLGKTGLVEMAKQNLDKSHYAKQKFREKGFEVLFSDGFFNEFVVKLSKPIKEVNESLLDEGIIGGYDLGFYEEKYENHMLVAVTEMRTKEEIDAFVASLEGAK.

This sequence belongs to the GcvP family. N-terminal subunit subfamily. The glycine cleavage system is composed of four proteins: P, T, L and H. In this organism, the P 'protein' is a heterodimer of two subunits.

The catalysed reaction is N(6)-[(R)-lipoyl]-L-lysyl-[glycine-cleavage complex H protein] + glycine + H(+) = N(6)-[(R)-S(8)-aminomethyldihydrolipoyl]-L-lysyl-[glycine-cleavage complex H protein] + CO2. In terms of biological role, the glycine cleavage system catalyzes the degradation of glycine. The P protein binds the alpha-amino group of glycine through its pyridoxal phosphate cofactor; CO(2) is released and the remaining methylamine moiety is then transferred to the lipoamide cofactor of the H protein. The polypeptide is Probable glycine dehydrogenase (decarboxylating) subunit 1 (Listeria monocytogenes serotype 4b (strain F2365)).